Consider the following 592-residue polypeptide: Putative D-/L-hydantoinase subunit B (592 aa).

It belongs to the HyuB family. In terms of assembly, may form a complex with HyuA.

Functionally, involved in the asymmetric conversion of racemic 5-substituted hydantoins to the corresponding L-amino acids. HyuA and HyuB are both required for the conversion of D- and L-5-substituted hydantoins to corresponding N-carbamoyl-D- and N-carbamoyl-L-amino acids, respectively. The polypeptide is Putative D-/L-hydantoinase subunit B (Pseudomonas sp. (strain NS671)).